We begin with the raw amino-acid sequence, 161 residues long: Protein UXT homolog (161 aa).

Belongs to the UXT family.

This is Protein UXT homolog from Dictyostelium discoideum (Social amoeba).